The primary structure comprises 441 residues: DNA-binding protein (441 aa).

Residues 1–18 (MERTPKRAHGFRSTKPVK) show a composition bias toward basic residues. A disordered region spans residues 1-85 (MERTPKRAHG…EESPEAPLSD (85 aa)). Composition is skewed to acidic residues over residues 24–33 (MMEEEEEEVE) and 67–79 (VDDE…EESP). Zn(2+) is bound by residues Cys191 and His193. Residues 204–236 (VELNPSSEAGKRALAEQNGVIEKNRFGRQVVVL) are flexible loop. Positions 244, 262, 305, 307, 359, and 380 each coordinate Zn(2+). The tract at residues 426–441 (EVLAPVSPIASDDPFA) is C-terminal arm, DBP binding.

The protein belongs to the adenoviridae E2A DNA-binding protein family. Homomultimerizes on viral ssDNA bound to pTP. Forms a initiation complex with viral polymerase, pTP and hosts NFIA and POU2F1/OCT1. Interacts with host SRCAP.

The protein resides in the host nucleus. In terms of biological role, plays a role in the elongation phase of viral strand displacement replication by unwinding the template in an ATP-independent fashion, employing its capacity to form multimers. Also enhances the rate of initiation. Released from template upon second strand synthesis. Assembles in complex with viral pTP, viral pol, host NFIA and host POU2F1/OCT1 on viral origin of replication. Covers the whole ssDNA genome during synthesis. The complementary strand synthesis induces its relese from DNA template. May inhibit cellular transcription mediated by the interaction between host SRCAP and CBP. The chain is DNA-binding protein from Fowl adenovirus A serotype 1 (strain CELO / Phelps) (FAdV-1).